Reading from the N-terminus, the 659-residue chain is Oligopeptide-binding protein AmiA (659 aa).

A signal peptide spans 1 to 22; that stretch reads MKKNRVFATAGLVLLAAGVLAA. Cysteine 23 carries N-palmitoyl cysteine lipidation. Cysteine 23 is lipidated: S-diacylglycerol cysteine.

The protein belongs to the bacterial solute-binding protein 5 family.

The protein resides in the cell membrane. Part of the binding-protein-dependent transport system for oligopeptides; probably an oligopeptide binding protein. The sequence is that of Oligopeptide-binding protein AmiA (amiA) from Streptococcus pneumoniae serotype 4 (strain ATCC BAA-334 / TIGR4).